Consider the following 227-residue polypeptide: Cleavage and polyadenylation specificity factor subunit 5 (227 aa).

Residue Ser-2 is modified to N-acetylserine. The necessary for RNA-binding stretch occupies residues 2–147; sequence SVVPPNRSQT…DWVIDDCIGN (146 aa). The residue at position 15 (Arg-15) is an Omega-N-methylarginine. Residues Lys-23 and Lys-29 each carry the N6-acetyllysine modification. Tyr-40 carries the post-translational modification Phosphotyrosine. Lys-56 carries the post-translational modification N6-acetyllysine. Positions 76-201 constitute a Nudix hydrolase domain; sequence MRRTVEGVLI…KLVAAPLFEL (126 aa). A necessary for interactions with PAPOLA and PABPN1 region spans residues 81–160; it reads EGVLIVHEHR…PNFEPPQYPY (80 aa). The interval 102-104 is interaction with RNA; sequence TFF. The Nudix box signature appears at 109–130; it reads GELNPGEDEVEGLKRLMTEILG.

Belongs to the Nudix hydrolase family. CPSF5 subfamily. As to quaternary structure, homodimer (via N- and C-terminus); binds RNA as homodimer. Component of the cleavage factor Im (CFIm) complex which is a heterotetramer composed of two subunits of NUDT21/CPSF5 and two subunits of CPSF6 or CPSF7 or a heterodimer of CPSF6 and CPSF7. The cleavage factor Im (CFIm) complex associates with the CPSF and CSTF complexes to promote the assembly of the core mRNA 3'-processing machinery. Interacts with CPSF6 (via the RRM domain); this interaction is direct and enhances binding to RNA. Interacts with CPSF7. Interacts with FIP1L1; this interaction occurs in a RNA sequence-specific manner. Interacts with PABPN1. Interacts (via N-terminus) with PAPOLA (via C-terminus); this interaction is direct and diminished by acetylation. Interacts with SNRNP70. Interacts with VIRMA. In terms of processing, acetylated mainly by p300/CBP, recruited to the complex by CPSF6. Acetylation decreases interaction with PAPAO. Deacetylated by the class I/II HDACs, HDAC1, HDAC3 and HDAC10, and by the class III HDACs, SIRT1 and SIRT2.

It is found in the nucleus. Its subcellular location is the cytoplasm. Functionally, component of the cleavage factor Im (CFIm) complex that functions as an activator of the pre-mRNA 3'-end cleavage and polyadenylation processing required for the maturation of pre-mRNA into functional mRNAs. CFIm contributes to the recruitment of multiprotein complexes on specific sequences on the pre-mRNA 3'-end, so called cleavage and polyadenylation signals (pA signals). Most pre-mRNAs contain multiple pA signals, resulting in alternative cleavage and polyadenylation (APA) producing mRNAs with variable 3'-end formation. The CFIm complex acts as a key regulator of cleavage and polyadenylation site choice during APA through its binding to 5'-UGUA-3' elements localized in the 3'-untranslated region (UTR) for a huge number of pre-mRNAs. NUDT21/CPSF5 activates indirectly the mRNA 3'-processing machinery by recruiting CPSF6 and/or CPSF7. Binds to 5'-UGUA-3' elements localized upstream of pA signals that act as enhancers of pre-mRNA 3'-end processing. The homodimer mediates simultaneous sequence-specific recognition of two 5'-UGUA-3' elements within the pre-mRNA. Plays a role in somatic cell fate transitions and pluripotency by regulating widespread changes in gene expression through an APA-dependent function. Binds to chromatin. Binds to, but does not hydrolyze mono- and di-adenosine nucleotides. The chain is Cleavage and polyadenylation specificity factor subunit 5 (NUDT21) from Bos taurus (Bovine).